We begin with the raw amino-acid sequence, 443 residues long: Chromosomal replication initiator protein DnaA (443 aa).

The tract at residues Met1–Tyr75 is domain I, interacts with DnaA modulators. The interval Tyr75 to Ser105 is domain II. The tract at residues Val106–Ser321 is domain III, AAA+ region. The ATP site is built by Gly150, Gly152, Lys153, and Thr154. The segment at Ser322–Lys443 is domain IV, binds dsDNA.

This sequence belongs to the DnaA family. As to quaternary structure, oligomerizes as a right-handed, spiral filament on DNA at oriC.

It is found in the cytoplasm. Plays an essential role in the initiation and regulation of chromosomal replication. ATP-DnaA binds to the origin of replication (oriC) to initiate formation of the DNA replication initiation complex once per cell cycle. Binds the DnaA box (a 9 base pair repeat at the origin) and separates the double-stranded (ds)DNA. Forms a right-handed helical filament on oriC DNA; dsDNA binds to the exterior of the filament while single-stranded (ss)DNA is stabiized in the filament's interior. The ATP-DnaA-oriC complex binds and stabilizes one strand of the AT-rich DNA unwinding element (DUE), permitting loading of DNA polymerase. After initiation quickly degrades to an ADP-DnaA complex that is not apt for DNA replication. Binds acidic phospholipids. In Acetivibrio thermocellus (strain ATCC 27405 / DSM 1237 / JCM 9322 / NBRC 103400 / NCIMB 10682 / NRRL B-4536 / VPI 7372) (Clostridium thermocellum), this protein is Chromosomal replication initiator protein DnaA.